Reading from the N-terminus, the 312-residue chain is MNYMRTAVLLAGLTALFMVVGFAIGGKGGMMVALLVAAGMNLFSYWYADKIVLGMYGAREVDMRTAPEFVAMVAELARRAELPMPKVYIIDNPQPNAFATGRNPQNAAVAATTGLLQTLNPDEVAGVMAHELAHVKHHDTLTMTITASIAGAISMLANFGLFFGGGNRESNNPFGGISAILMAILAPIAAMVVQMAISRSREYEADRGGAEICGQPLALASALAKIAGGAHAVPNYAAEANPATAHMFIINPLSGARMDNLFSTHPNTENRIAALEDLARQMGGYRPAPARAAPARGPWGGNTGGTRRGPWG.

Helical transmembrane passes span 6–26 and 28–48; these read TAVL…AIGG and GGMM…YWYA. A Zn(2+)-binding site is contributed by histidine 130. Glutamate 131 is a catalytic residue. Histidine 134 lines the Zn(2+) pocket. 2 helical membrane passes run 145 to 165 and 173 to 193; these read ITAS…FFGG and PFGG…AMVV. Position 202 (glutamate 202) interacts with Zn(2+). Positions 287–297 are enriched in low complexity; that stretch reads PAPARAAPARG. Residues 287–312 are disordered; sequence PAPARAAPARGPWGGNTGGTRRGPWG. Over residues 298–312 the composition is skewed to gly residues; it reads PWGGNTGGTRRGPWG.

This sequence belongs to the peptidase M48B family. The cofactor is Zn(2+).

The protein resides in the cell inner membrane. This Azorhizobium caulinodans (strain ATCC 43989 / DSM 5975 / JCM 20966 / LMG 6465 / NBRC 14845 / NCIMB 13405 / ORS 571) protein is Protease HtpX homolog.